The sequence spans 787 residues: Pyridoxal-dependent decarboxylase domain-containing protein 1 (787 aa).

Residues 29 to 41 (EDSQRRTEEENGK) are compositionally biased toward basic and acidic residues. The tract at residues 29 to 52 (EDSQRRTEEENGKKLLSGDIPGPL) is disordered. At Ser-653 the chain carries Phosphoserine. The interval 683-787 (QGSGVTPPQT…PQVEEPESLR (105 aa)) is disordered. Residues 685–697 (SGVTPPQTPTGTR) show a composition bias toward polar residues. A phosphothreonine mark is found at Thr-688 and Thr-692. Phosphoserine is present on residues Ser-711, Ser-719, and Ser-723. A compositionally biased stretch (polar residues) spans 735 to 745 (QSSGGQEASEA). Residues Ser-747 and Ser-785 each carry the phosphoserine modification. The span at 774-787 (QDDRPQVEEPESLR) shows a compositional bias: basic and acidic residues.

This sequence belongs to the group II decarboxylase family. The cofactor is pyridoxal 5'-phosphate.

In Bos taurus (Bovine), this protein is Pyridoxal-dependent decarboxylase domain-containing protein 1 (PDXDC1).